Here is a 502-residue protein sequence, read N- to C-terminus: Arabinose import ATP-binding protein AraG (502 aa).

2 ABC transporter domains span residues 5–240 (LEFS…MVGR) and 253–496 (LGGI…LPDK). Position 37–44 (37–44 (GENGAGKS)) interacts with ATP.

Belongs to the ABC transporter superfamily. Arabinose importer (TC 3.A.1.2.2) family. As to quaternary structure, the complex is composed of two ATP-binding proteins (AraG), two transmembrane proteins (AraH) and a solute-binding protein (AraF).

The protein resides in the cell inner membrane. It catalyses the reaction L-arabinose(out) + ATP + H2O = L-arabinose(in) + ADP + phosphate + H(+). In terms of biological role, part of the ABC transporter complex AraFGH involved in arabinose import. Responsible for energy coupling to the transport system. The polypeptide is Arabinose import ATP-binding protein AraG (Rhizobium johnstonii (strain DSM 114642 / LMG 32736 / 3841) (Rhizobium leguminosarum bv. viciae)).